The sequence spans 146 residues: Globin (146 aa).

Ala-1 carries the N-acetylalanine modification. Residues 1–146 form the Globin domain; that stretch reads ALTEPQKTAL…LLTMLIKAHS (146 aa). Heme b-binding residues include His-65 and His-97.

Belongs to the globin family. In terms of assembly, homodimer.

The protein is Globin of Buccinum undatum (Common whelk).